Here is a 295-residue protein sequence, read N- to C-terminus: Sulfotransferase 1E1 (295 aa).

48-53 (KSGTTW) provides a ligand contact to 3'-phosphoadenylyl sulfate. Residue 106-108 (KSH) coordinates substrate. His-108 serves as the catalytic Proton acceptor. The 3'-phosphoadenylyl sulfate site is built by Arg-130, Ser-138, and Tyr-193. Ser-216 and Ser-228 each carry phosphoserine; by PKA. Residues 227–232 (TSFQEM) and 257–259 (RKG) each bind 3'-phosphoadenylyl sulfate.

It belongs to the sulfotransferase 1 family. In terms of assembly, homodimer.

It localises to the cytoplasm. Its subcellular location is the cytosol. It carries out the reaction estrone + 3'-phosphoadenylyl sulfate = estrone 3-sulfate + adenosine 3',5'-bisphosphate + H(+). The enzyme catalyses (24S)-hydroxycholesterol + 3'-phosphoadenylyl sulfate = (24S)-hydroxycholesterol 3-sulfate + adenosine 3',5'-bisphosphate + H(+). The catalysed reaction is 17beta-estradiol + 3'-phosphoadenylyl sulfate = 17beta-estradiol 3-sulfate + adenosine 3',5'-bisphosphate + H(+). It catalyses the reaction 3beta-hydroxyandrost-5-en-17-one + 3'-phosphoadenylyl sulfate = dehydroepiandrosterone 3-sulfate + adenosine 3',5'-bisphosphate + H(+). It carries out the reaction 4-ethylphenol + 3'-phosphoadenylyl sulfate = 4-ethylphenyl sulfate + adenosine 3',5'-bisphosphate + H(+). Inhibited by estradiol. Its function is as follows. Sulfotransferase that utilizes 3'-phospho-5'-adenylyl sulfate (PAPS) as sulfonate donor to catalyze the sulfate conjugation of estradiol and estrone. Is a key enzyme in estrogen homeostasis, the sulfation of estrogens leads to their inactivation. Also sulfates dehydroepiandrosterone (DHEA), pregnenolone, (24S)-hydroxycholesterol and xenobiotic compounds like ethinylestradiol, equalenin, diethyl stilbesterol and 1-naphthol at significantly lower efficiency. Does not sulfonate cortisol, testosterone and dopamine. May play a role in gut microbiota-host metabolic interaction. O-sulfonates 4-ethylphenol (4-EP), a dietary tyrosine-derived metabolite produced by gut bacteria. The product 4-EPS crosses the blood-brain barrier and may negatively regulate oligodendrocyte maturation and myelination, affecting the functional connectivity of different brain regions associated with the limbic system. The sequence is that of Sulfotransferase 1E1 (SULT1E1) from Bos taurus (Bovine).